The chain runs to 207 residues: MAPRGNQMLGNAHFRKHWHKRIKTWFDQPARKLRRRQNRQAKAVEIAPRPVAGLLRSVVRCPQKRYNTKTRLGRGFSLQELKAAGISQAQARTIGIAVDVRRTNKTAEGLKANADRLKEYKAKLILFPKKASAPKKGDSSAEELKVAAQLRGDVLPLSHTITFDEPRQVTDAERKVEIFRLLRKERADKKYRGKREKRAREAAEENK.

This sequence belongs to the eukaryotic ribosomal protein eL13 family. As to quaternary structure, component of the 60S large ribosomal subunit (LSU).

The protein resides in the cytoplasm. Functionally, component of the ribosome, a large ribonucleoprotein complex responsible for the synthesis of proteins in the cell. The small ribosomal subunit (SSU) binds messenger RNAs (mRNAs) and translates the encoded message by selecting cognate aminoacyl-transfer RNA (tRNA) molecules. The large subunit (LSU) contains the ribosomal catalytic site termed the peptidyl transferase center (PTC), which catalyzes the formation of peptide bonds, thereby polymerizing the amino acids delivered by tRNAs into a polypeptide chain. The nascent polypeptides leave the ribosome through a tunnel in the LSU and interact with protein factors that function in enzymatic processing, targeting, and the membrane insertion of nascent chains at the exit of the ribosomal tunnel. As part of the LSU, it is probably required for its formation and the maturation of rRNAs. This Caenorhabditis elegans protein is Large ribosomal subunit protein eL13 (rpl-13).